Reading from the N-terminus, the 524-residue chain is PiggyBac transposable element-derived protein 5 (524 aa).

The interval 30–117 (DDVFGESGPD…DTGGPTRKMP (88 aa)) is disordered. Residues 47-59 (STSAASRSSSAAS) show a composition bias toward low complexity. Pro residues predominate over residues 67–79 (PGPPGAAPPPPRA). Over residues 98–108 (LRDRPPPRFED) the composition is skewed to basic and acidic residues. The residue at position 521 (S521) is a Phosphoserine.

It is found in the nucleus. Its function is as follows. Transposase that mediates sequence-specific genomic rearrangements. Can induce genomic rearrangements that inactivate the HPRT1 gene. The polypeptide is PiggyBac transposable element-derived protein 5 (PGBD5) (Homo sapiens (Human)).